Here is a 121-residue protein sequence, read N- to C-terminus: Small ribosomal subunit protein uS13 (121 aa).

The tract at residues 94 to 121 (GLPVRGQNTKNNARTRKGPRRTVANKKK) is disordered. The span at 106 to 121 (ARTRKGPRRTVANKKK) shows a compositional bias: basic residues.

This sequence belongs to the universal ribosomal protein uS13 family. As to quaternary structure, part of the 30S ribosomal subunit. Forms a loose heterodimer with protein S19. Forms two bridges to the 50S subunit in the 70S ribosome.

Functionally, located at the top of the head of the 30S subunit, it contacts several helices of the 16S rRNA. In the 70S ribosome it contacts the 23S rRNA (bridge B1a) and protein L5 of the 50S subunit (bridge B1b), connecting the 2 subunits; these bridges are implicated in subunit movement. Contacts the tRNAs in the A and P-sites. In Geobacillus sp. (strain WCH70), this protein is Small ribosomal subunit protein uS13.